The chain runs to 240 residues: Ribosomal RNA small subunit methyltransferase G (240 aa).

S-adenosyl-L-methionine contacts are provided by residues glycine 77, phenylalanine 82, 128–129 (AE), and arginine 148. The segment at 217–240 (EKRSKTPKKYPRKAGTPNKSPLLK) is disordered.

Belongs to the methyltransferase superfamily. RNA methyltransferase RsmG family.

The protein localises to the cytoplasm. Functionally, specifically methylates the N7 position of guanine in position 535 of 16S rRNA. The protein is Ribosomal RNA small subunit methyltransferase G of Staphylococcus carnosus (strain TM300).